The primary structure comprises 105 residues: DNA-directed RNA polymerase subunit omega (105 aa).

This sequence belongs to the RNA polymerase subunit omega family. As to quaternary structure, the RNAP catalytic core consists of 2 alpha, 1 beta, 1 beta' and 1 omega subunit. When a sigma factor is associated with the core the holoenzyme is formed, which can initiate transcription.

The enzyme catalyses RNA(n) + a ribonucleoside 5'-triphosphate = RNA(n+1) + diphosphate. In terms of biological role, promotes RNA polymerase assembly. Latches the N- and C-terminal regions of the beta' subunit thereby facilitating its interaction with the beta and alpha subunits. This Streptococcus uberis (strain ATCC BAA-854 / 0140J) protein is DNA-directed RNA polymerase subunit omega.